Here is a 1310-residue protein sequence, read N- to C-terminus: Adhesion G protein-coupled receptor A3 (1310 aa).

The signal sequence occupies residues 1 to 27 (MEPPPPLLLLPLALLALLWGGERGAAA). In terms of domain architecture, LRRNT spans 28–70 (LPAGCKHDGRARGTGRAAAAAEGKVVCSSLELAQVLPPDTLPN). Residues 28 to 747 (LPAGCKHDGR…TELYTPAASL (720 aa)) are Extracellular-facing. Asparagine 70 and asparagine 87 each carry an N-linked (GlcNAc...) asparagine glycan. 4 LRR repeats span residues 71–92 (RTVT…SFSG), 95–116 (LLER…AFWG), 119–140 (SLKR…VFRG), and 143–164 (NLVR…TFDY). N-linked (GlcNAc...) asparagine glycans are attached at residues asparagine 148, asparagine 195, asparagine 290, asparagine 321, asparagine 422, asparagine 442, asparagine 581, asparagine 641, asparagine 676, and asparagine 717. The 51-residue stretch at 176-226 (EYLLCDCNILWMHRWVKERNITVRDTRCVYPKSLQAQPVTGVKQELLTCDP) folds into the LRRCT domain. Positions 231 to 329 (PSFYMTPSHR…GNNTRTVDIV (99 aa)) constitute an Ig-like domain. Cysteine 253 and cysteine 313 are disulfide-bonded. A GAIN-B domain is found at 572–739 (LDKQLSFKCN…AVLMDLTGTE (168 aa)). Residues 690-739 (AAQWDFDLLNGQGGWKSDGCCILYSDENITTIQCGSLGNYAVLMDLTGTE) are GPS. Residues cysteine 709 and cysteine 723 are joined by a disulfide bond. The helical transmembrane segment at 748–768 (LHPVVYTTAITLLLCLLAVII) threads the bilayer. The Cytoplasmic segment spans residues 769-785 (SYMYHHSLIRISLKSWH). Residues 786 to 806 (MLVNLCFHILLTCVVFVGGIT) form a helical membrane-spanning segment. Residues 807–815 (QTRNASVCQ) lie on the Extracellular side of the membrane. Asparagine 810 carries an N-linked (GlcNAc...) asparagine glycan. Residues 816–836 (AVGIILHYSTLATVLWVGVTA) traverse the membrane as a helical segment. The Cytoplasmic segment spans residues 837 to 865 (RNIYKQVTKKAKRCQDPDEPPAPPRPMLR). The chain crosses the membrane as a helical span at residues 866 to 886 (FYLIGGGIPIIVCGITAAANI). Over 887-908 (KNYGSRPSAPYCWMAWEPSLGA) the chain is Extracellular. The chain crosses the membrane as a helical span at residues 909–929 (FYGPASFITFVNCMYFLSIFI). Residues 930 to 985 (QLKRHPERKYELKEPTEEQQRLAANENGEINHQDSMSLSLISTSTLENEHSFQSQL) are Cytoplasmic-facing. A helical transmembrane segment spans residues 986 to 1006 (LGASLTLLLYVILWMFGAMAV). The Extracellular portion of the chain corresponds to 1007–1013 (SLYYPLD). The helical transmembrane segment at 1014–1034 (LVFSFFFGATCLSFSAFMMVH) threads the bilayer. Topologically, residues 1035–1310 (HCINREDVRL…TGLWKHETTV (276 aa)) are cytoplasmic. Disordered stretches follow at residues 1065-1084 (PPNS…SSAE), 1187-1208 (VEGS…GHSR), and 1221-1264 (YNPP…ADLE). A compositionally biased stretch (polar residues) spans 1222–1239 (NPPQQDSSDACSTLPKSS). The PDZ-binding signature appears at 1308 to 1310 (TTV).

It belongs to the G-protein coupled receptor 2 family. Adhesion G-protein coupled receptor (ADGR) subfamily. Interacts (via PDZ-binding motif) with DLG1. In terms of tissue distribution, expressed by spermatogonial progenitor cells located within the outer cell layer of the seminiferous tubule and by multipotent adult spermatogonial-derived stem cells.

Its subcellular location is the membrane. Its function is as follows. Orphan receptor that may have a role in planar cell polarity pathway. The sequence is that of Adhesion G protein-coupled receptor A3 (Adgra3) from Mus musculus (Mouse).